The sequence spans 274 residues: MAIVKCKPTSPGRRFVVKVVNQELHKGAPHAPLLEKKSKTGGRNNNGRITTRHIGGGHKQHYRLVDFRRNDKDGISATVERIEYDPNRTAHIALLLYADGERRYIIAPKGVSAGDQLIAGALAPIKPGNALQLRNIPVGSTVHGIELKPGKGAQIARSAGASAQLIAREGVYVTLRLRSGEMRKVLAECRATLGEVSNSEHSLRSLGKAGAKRWRGVRPTVRGVAMNPVDHPHGGGEGRTSGGRHPVSPWGFPTKGAKTRGNKRTDKMIVRRRK.

Disordered stretches follow at residues alanine 28–isoleucine 54 and valine 224–lysine 274. A compositionally biased stretch (basic and acidic residues) spans lysine 263 to lysine 274.

This sequence belongs to the universal ribosomal protein uL2 family. Part of the 50S ribosomal subunit. Forms a bridge to the 30S subunit in the 70S ribosome.

Functionally, one of the primary rRNA binding proteins. Required for association of the 30S and 50S subunits to form the 70S ribosome, for tRNA binding and peptide bond formation. It has been suggested to have peptidyltransferase activity; this is somewhat controversial. Makes several contacts with the 16S rRNA in the 70S ribosome. The chain is Large ribosomal subunit protein uL2 from Pseudomonas fluorescens (strain SBW25).